Consider the following 195-residue polypeptide: MGANNQGKVFEANIEKSAADQKLFFYRIKDVNPMFLKRGAAVSKNKYDCFLFFKGYLFPFELKSTKSKSISFSEKIIKPQQIKYLREATQYPNIIPGFLFQFREPENKVYFVHINDFLTYKNIAEKQLKHTYKNKVNKASIPIAICEEIGTEVRSMKKKVNYTYYLNKLCGELIKKEQSRDKPLHTYNTPVKTGV.

The protein is SPbeta prophage-derived uncharacterized protein YotM (yotM) of Bacillus subtilis (strain 168).